Here is a 290-residue protein sequence, read N- to C-terminus: 4-hydroxy-tetrahydrodipicolinate synthase (290 aa).

Residue T44 coordinates pyruvate. Y132 functions as the Proton donor/acceptor in the catalytic mechanism. K160 acts as the Schiff-base intermediate with substrate in catalysis. Pyruvate is bound at residue I202.

It belongs to the DapA family. As to quaternary structure, homotetramer; dimer of dimers.

It localises to the cytoplasm. The catalysed reaction is L-aspartate 4-semialdehyde + pyruvate = (2S,4S)-4-hydroxy-2,3,4,5-tetrahydrodipicolinate + H2O + H(+). It functions in the pathway amino-acid biosynthesis; L-lysine biosynthesis via DAP pathway; (S)-tetrahydrodipicolinate from L-aspartate: step 3/4. Its function is as follows. Catalyzes the condensation of (S)-aspartate-beta-semialdehyde [(S)-ASA] and pyruvate to 4-hydroxy-tetrahydrodipicolinate (HTPA). The polypeptide is 4-hydroxy-tetrahydrodipicolinate synthase (Cereibacter sphaeroides (strain ATCC 17025 / ATH 2.4.3) (Rhodobacter sphaeroides)).